The sequence spans 660 residues: UvrABC system protein C (660 aa).

The GIY-YIG domain occupies 16–95; it reads ESPGVYRFRD…IKQYDPRFNV (80 aa). A UVR domain is found at 208 to 243; the sequence is DAMVRRLEREMAEASAELEFERAARLRDDLAALRRA. A disordered region spans residues 469–501; sequence GEAGVESAGDPDAPAGPDAPDEPRVGTLVDPTT. Positions 476–486 are enriched in low complexity; it reads AGDPDAPAGPD.

The protein belongs to the UvrC family. As to quaternary structure, interacts with UvrB in an incision complex.

Its subcellular location is the cytoplasm. Its function is as follows. The UvrABC repair system catalyzes the recognition and processing of DNA lesions. UvrC both incises the 5' and 3' sides of the lesion. The N-terminal half is responsible for the 3' incision and the C-terminal half is responsible for the 5' incision. This Salinispora arenicola (strain CNS-205) protein is UvrABC system protein C.